Consider the following 425-residue polypeptide: Inner membrane protein YqcE (425 aa).

At 1-8 (MQHNSYRR) the chain is on the cytoplasmic side. A helical membrane pass occupies residues 9–29 (WITLAIISFSGGVSFDLAYLR). Residues 30-48 (YIYQIPMAKFMGFSNTEIG) are Periplasmic-facing. The chain crosses the membrane as a helical span at residues 49-69 (LIMSTFGIAAIILYAPSGVIA). Residues 70–75 (DKFSHR) are Cytoplasmic-facing. 2 helical membrane passes run 76–96 (KMITSAMIITGLLGLLMATYP) and 97–117 (PLWVMLCIQIAFAITTILMLW). At 118–138 (SVSIKAASLLGDHSEQGKIMG) the chain is on the cytoplasmic side. The helical transmembrane segment at 139–159 (WMEGLRGVGVMSLAVFTMWVF) threads the bilayer. Residues 160–171 (SRFAPDDSTSLK) lie on the Periplasmic side of the membrane. Residues 172–192 (TVIIIYSVVYILLGILCWFFV) form a helical membrane-spanning segment. The Cytoplasmic portion of the chain corresponds to 193 to 219 (SDNNNLRSANNEEKQSFQLSDILAVLR). Residues 220-240 (ISTTWYCSMVIFGVFTIYAIL) form a helical membrane-spanning segment. Over 241–259 (SYSTNYLTEMYGMSLVAAS) the chain is Periplasmic. A helical membrane pass occupies residues 260-280 (YMGIVINKIFRALCGPLGGII). The Cytoplasmic segment spans residues 281 to 291 (TTYSKVKSPTR). A helical transmembrane segment spans residues 292–312 (VIQILSVLGLLTLTALLVTNS). Residue asparagine 313 is a topological domain, periplasmic. Residues 314 to 334 (PQSVAMGIGLILLLGFTCYAS) form a helical membrane-spanning segment. The Cytoplasmic segment spans residues 335–354 (RGLYWACPGEARTPSYIMGT). Residues 355-375 (TVGICSVIGFLPDVFVYPIIG) form a helical membrane-spanning segment. The Periplasmic segment spans residues 376–388 (HWQDTLPAAEAYR). Residues 389 to 409 (NMWLMGMAALGMVIVFTFLLF) traverse the membrane as a helical segment. Over 410-425 (QKIRTADSAPAMASSK) the chain is Cytoplasmic.

To E.coli YihN.

Its subcellular location is the cell inner membrane. This chain is Inner membrane protein YqcE (yqcE), found in Escherichia coli (strain K12).